Reading from the N-terminus, the 341-residue chain is Ketol-acid reductoisomerase (NADP(+)) (341 aa).

In terms of domain architecture, KARI N-terminal Rossmann spans 2–181 (VKVYYNGDAN…GSARAGVIET (180 aa)). Residues 25–28 (YGSQ), Arg48, Ser52, and 82–85 (DEHQ) each bind NADP(+). Residue His107 is part of the active site. Gly133 is an NADP(+) binding site. Residues 182-327 (TFKEETETDL…RELRKMMPFV (146 aa)) form the KARI C-terminal knotted domain. Residues Asp190, Glu194, Glu226, and Glu230 each coordinate Mg(2+). Ser251 provides a ligand contact to substrate.

Belongs to the ketol-acid reductoisomerase family. Mg(2+) is required as a cofactor.

It catalyses the reaction (2R)-2,3-dihydroxy-3-methylbutanoate + NADP(+) = (2S)-2-acetolactate + NADPH + H(+). The enzyme catalyses (2R,3R)-2,3-dihydroxy-3-methylpentanoate + NADP(+) = (S)-2-ethyl-2-hydroxy-3-oxobutanoate + NADPH + H(+). It functions in the pathway amino-acid biosynthesis; L-isoleucine biosynthesis; L-isoleucine from 2-oxobutanoate: step 2/4. Its pathway is amino-acid biosynthesis; L-valine biosynthesis; L-valine from pyruvate: step 2/4. Functionally, involved in the biosynthesis of branched-chain amino acids (BCAA). Catalyzes an alkyl-migration followed by a ketol-acid reduction of (S)-2-acetolactate (S2AL) to yield (R)-2,3-dihydroxy-isovalerate. In the isomerase reaction, S2AL is rearranged via a Mg-dependent methyl migration to produce 3-hydroxy-3-methyl-2-ketobutyrate (HMKB). In the reductase reaction, this 2-ketoacid undergoes a metal-dependent reduction by NADPH to yield (R)-2,3-dihydroxy-isovalerate. This chain is Ketol-acid reductoisomerase (NADP(+)), found in Anoxybacillus flavithermus (strain DSM 21510 / WK1).